Reading from the N-terminus, the 643-residue chain is Threonine--tRNA ligase (643 aa).

The TGS domain maps to 1–61 (MIKVSLKDGS…NEDVSLSICT (61 aa)). Positions 240–540 (DHNKLGRELK…LIEKYAGAFP (301 aa)) are catalytic. Zn(2+)-binding residues include cysteine 335, histidine 386, and histidine 517.

This sequence belongs to the class-II aminoacyl-tRNA synthetase family. Homodimer. The cofactor is Zn(2+).

Its subcellular location is the cytoplasm. The catalysed reaction is tRNA(Thr) + L-threonine + ATP = L-threonyl-tRNA(Thr) + AMP + diphosphate + H(+). Functionally, catalyzes the attachment of threonine to tRNA(Thr) in a two-step reaction: L-threonine is first activated by ATP to form Thr-AMP and then transferred to the acceptor end of tRNA(Thr). Also edits incorrectly charged L-seryl-tRNA(Thr). The sequence is that of Threonine--tRNA ligase from Clostridium botulinum (strain Alaska E43 / Type E3).